A 516-amino-acid chain; its full sequence is Delta(24)-sterol reductase (516 aa).

The signal sequence occupies residues 1–22 (MEPAVSLAVCALLFLLWVRLKG). Residues 23–31 (LEFVLIHQR) are Lumenal-facing. A helical membrane pass occupies residues 32 to 52 (WVFVCLFLLPLSLIFDIYYYV). The Cytoplasmic segment spans residues 53-516 (RAWVVFKLSS…YDKICKAARH (464 aa)). An FAD-binding PCMH-type domain is found at 58-234 (FKLSSAPRLH…VAAEIRIIPA (177 aa)). Residue 163–175 (TVGGLIMGTGIES) participates in FAD binding.

It belongs to the FAD-binding oxidoreductase/transferase type 4 family. In terms of assembly, interacts with DHCR7; this interaction regulates DHCR7 activity. It depends on FAD as a cofactor. As to expression, highly expressed in brain and adrenal gland with moderate expression in liver, lung, spleen, prostate and spinal cord. Low expression in heart, uterus and prostate. Undetectable in blood cells. In the brain, strongly expressed in cortical regions, substantia nigra, caudate nucleus, hippocampus, medulla oblongata and pons. In brains affected by Alzheimer disease, expression in the inferior temporal lobe is substantially lower than in the frontal cortex.

The protein resides in the endoplasmic reticulum membrane. Its subcellular location is the golgi apparatus membrane. The catalysed reaction is cholesterol + NADP(+) = desmosterol + NADPH + H(+). The enzyme catalyses lanosterol + NADPH + H(+) = 24,25-dihydrolanosterol + NADP(+). It catalyses the reaction 5alpha-cholest-8-en-3beta-ol + NADP(+) = zymosterol + NADPH + H(+). Its pathway is steroid biosynthesis; cholesterol biosynthesis. Catalyzes the reduction of the delta-24 double bond of sterol intermediates during cholesterol biosynthesis. In addition to its cholesterol-synthesizing activity, can protect cells from oxidative stress by reducing caspase 3 activity during apoptosis induced by oxidative stress. Also protects against amyloid-beta peptide-induced apoptosis. The protein is Delta(24)-sterol reductase (DHCR24) of Homo sapiens (Human).